The following is a 169-amino-acid chain: Prolyl-tRNA synthetase associated domain-containing protein 1 (169 aa).

This sequence belongs to the PRORSD1 family.

The protein is Prolyl-tRNA synthetase associated domain-containing protein 1 (Prorsd1) of Mus musculus (Mouse).